Reading from the N-terminus, the 331-residue chain is Ketol-acid reductoisomerase (NADP(+)) (331 aa).

The region spanning Ala2–Thr182 is the KARI N-terminal Rossmann domain. NADP(+)-binding positions include Tyr25 to Gln28, Ser51, Ser53, and Asp83 to Gln86. Residue His108 is part of the active site. Gly134 is an NADP(+) binding site. Residues Ser183 to Leu328 enclose the KARI C-terminal knotted domain. Mg(2+) is bound by residues Asp191, Glu195, Glu227, and Glu231. A substrate-binding site is contributed by Ser252.

It belongs to the ketol-acid reductoisomerase family. It depends on Mg(2+) as a cofactor.

It catalyses the reaction (2R)-2,3-dihydroxy-3-methylbutanoate + NADP(+) = (2S)-2-acetolactate + NADPH + H(+). It carries out the reaction (2R,3R)-2,3-dihydroxy-3-methylpentanoate + NADP(+) = (S)-2-ethyl-2-hydroxy-3-oxobutanoate + NADPH + H(+). It functions in the pathway amino-acid biosynthesis; L-isoleucine biosynthesis; L-isoleucine from 2-oxobutanoate: step 2/4. Its pathway is amino-acid biosynthesis; L-valine biosynthesis; L-valine from pyruvate: step 2/4. In terms of biological role, involved in the biosynthesis of branched-chain amino acids (BCAA). Catalyzes an alkyl-migration followed by a ketol-acid reduction of (S)-2-acetolactate (S2AL) to yield (R)-2,3-dihydroxy-isovalerate. In the isomerase reaction, S2AL is rearranged via a Mg-dependent methyl migration to produce 3-hydroxy-3-methyl-2-ketobutyrate (HMKB). In the reductase reaction, this 2-ketoacid undergoes a metal-dependent reduction by NADPH to yield (R)-2,3-dihydroxy-isovalerate. The sequence is that of Ketol-acid reductoisomerase (NADP(+)) from Crocosphaera subtropica (strain ATCC 51142 / BH68) (Cyanothece sp. (strain ATCC 51142)).